Here is a 22-residue protein sequence, read N- to C-terminus: 2.39 kDa venom peptide (22 aa).

Contains 2 disulfide bonds. In terms of tissue distribution, expressed by the venom gland.

It is found in the secreted. Functionally, not lethal to mice by intraperitoneal or intracerebroventricular injections in doses up to 100 micrograms. In Heterometrus spinifer (Asia giant forest scorpion), this protein is 2.39 kDa venom peptide.